Here is a 252-residue protein sequence, read N- to C-terminus: 14-3-3 protein 7 (252 aa).

It belongs to the 14-3-3 family. Homodimer.

The polypeptide is 14-3-3 protein 7 (TFT7) (Solanum lycopersicum (Tomato)).